Reading from the N-terminus, the 275-residue chain is Caspase-3 (275 aa).

Residue Met-1 is modified to N-acetylmethionine. Propeptides lie at residues 1–9 (MENTENSVD) and 10–28 (SKSIKTSETKILHGSKSMD). The residue at position 11 (Lys-11) is an N6-acetyllysine. Ser-26 carries the post-translational modification Phosphoserine. Catalysis depends on residues His-121 and Cys-163. Residue Cys-163 is modified to S-nitrosocysteine; in inhibited form.

The protein belongs to the peptidase C14A family. In terms of assembly, heterotetramer that consists of two anti-parallel arranged heterodimers, each one formed by a 17 kDa (p17) and a 12 kDa (p12) subunit. Interacts with BIRC6/bruce. Cleavage by granzyme B, caspase-6, caspase-8 and caspase-10 generates the two active subunits. Additional processing of the propeptides is likely due to the autocatalytic activity of the activated protease. Active heterodimers between the small subunit of caspase-7 protease and the large subunit of caspase-3 also occur and vice versa. In terms of processing, S-nitrosylated on its catalytic site cysteine in unstimulated cell lines and denitrosylated upon activation of the Fas apoptotic pathway, associated with an increase in intracellular caspase activity. Fas therefore activates caspase-3 not only by inducing the cleavage of the caspase zymogen to its active subunits, but also by stimulating the denitrosylation of its active site thiol. Post-translationally, ubiquitinated by BIRC6; this activity is inhibited by DIABLO/SMAC.

It is found in the cytoplasm. It catalyses the reaction Strict requirement for an Asp residue at positions P1 and P4. It has a preferred cleavage sequence of Asp-Xaa-Xaa-Asp-|- with a hydrophobic amino-acid residue at P2 and a hydrophilic amino-acid residue at P3, although Val or Ala are also accepted at this position.. Inhibited by BIRC6; following inhibition of BIRC6-caspase binding by DIABLO/SMAC, BIRC6 is subjected to caspase cleavage, leading to an increase in active caspases. Functionally, involved in the activation cascade of caspases responsible for apoptosis execution. At the onset of apoptosis, it proteolytically cleaves poly(ADP-ribose) polymerase PARP1 at a '216-Asp-|-Gly-217' bond. Cleaves and activates sterol regulatory element binding proteins (SREBPs) between the basic helix-loop-helix leucine zipper domain and the membrane attachment domain. Cleaves and activates caspase-6, -7 and -9 (CASP6, CASP7 and CASP9, respectively). Cleaves and inactivates interleukin-18 (IL18). Triggers cell adhesion in sympathetic neurons through RET cleavage. Cleaves IL-1 beta between an Asp and an Ala, releasing the mature cytokine which is involved in a variety of inflammatory processes. Cleaves and inhibits serine/threonine-protein kinase AKT1 in response to oxidative stress. Acts as an inhibitor of type I interferon production during virus-induced apoptosis by mediating cleavage of antiviral proteins CGAS, IRF3 and MAVS, thereby preventing cytokine overproduction. Also involved in pyroptosis by mediating cleavage and activation of gasdermin-E (GSDME). Cleaves XRCC4 and phospholipid scramblase proteins XKR4, XKR8 and XKR9, leading to promote phosphatidylserine exposure on apoptotic cell surface. Cleaves BIRC6 following inhibition of BIRC6-caspase binding by DIABLO/SMAC. In Bos taurus (Bovine), this protein is Caspase-3 (CASP3).